A 440-amino-acid chain; its full sequence is 5-hydroxytryptamine receptor 6 (440 aa).

Residues 1–27 (MVPEPGPVNSSTPAWGPGPPPAPGGSG) lie on the Extracellular side of the membrane. The N-linked (GlcNAc...) asparagine glycan is linked to asparagine 9. A helical membrane pass occupies residues 28 to 52 (WVAAALCVVIVLTAAANSLLIALIC). The Cytoplasmic segment spans residues 53–62 (TQPALRNTSN). Residues 63–88 (FFLVSLFTSDLMVGLVVMPPAMLNAL) form a helical membrane-spanning segment. At 89-96 (YGRWVLAR) the chain is on the extracellular side. Residues 97–122 (GLCLLWTAFDVMCCSASILNLCLISL) traverse the membrane as a helical segment. The cysteines at positions 99 and 180 are disulfide-linked. Residue aspartate 106 coordinates serotonin. Residues 123–142 (DRYLLILSPLRYKLRMTAPR) are Cytoplasmic-facing. A helical membrane pass occupies residues 143 to 167 (ALALILGAWSLAALASFLPLLLGWH). The Extracellular portion of the chain corresponds to 168–185 (ELGKARTSAPGQCRLLAS). Residues 186 to 209 (LPYVLVASGVTFFLPSGAICFTYC) traverse the membrane as a helical segment. The Cytoplasmic segment spans residues 210-268 (RILLAARKQAVQVASLTTGTATAGQALETLQVPRTPRPGMESADSRRLTTKHSRKALKA). The chain crosses the membrane as a helical span at residues 269 to 295 (SLTLGILLSMFFVTWLPFFVASIAQAV). Over 296 to 301 (CDCISP) the chain is Extracellular. The chain crosses the membrane as a helical span at residues 302–325 (GLFDVLTWLGYCNSTMNPIIYPLF). Residues 326-440 (MRDFKRALGR…RQHPLGSPMN (115 aa)) lie on the Cytoplasmic side of the membrane.

The protein belongs to the G-protein coupled receptor 1 family. In terms of assembly, interacts with CDK5. Interacts with MTOR. Interacts with RPTOR and NF1.

Its subcellular location is the cell membrane. In terms of biological role, G-protein coupled receptor for 5-hydroxytryptamine (serotonin), a biogenic hormone that functions as a neurotransmitter, a hormone and a mitogen. Also has a high affinity for tricyclic psychotropic drugs. Ligand binding causes a conformation change that triggers signaling via guanine nucleotide-binding proteins (G proteins) and modulates the activity of downstream effectors. HTR6 is coupled to G(s) G alpha proteins and mediates activation of adenylate cyclase activity. Controls pyramidal neurons migration during corticogenesis, through the regulation of CDK5 activity. Is an activator of mTOR signaling. In Mus musculus (Mouse), this protein is 5-hydroxytryptamine receptor 6.